Consider the following 674-residue polypeptide: MDPAAPAARMTSSFTINISTPSFYNPPKKFAPVVPPKPKVNPFRAAEEPVPQENSAGPGLRRAFVGKVGQIPSMAPPGGDPEDFVLPPPPPNEEPMSPPGSSFPPPPPSFGDDGPGSPLGLFPPPPPPEFSEPFPPPIEESFPSPPPLEEAAGLSDTQDPPASVPPPPPPLPSPPEPAPPVLCEAPKPAPVLPKPPPPSAFPKPEPPQSVAPKAQSSIFIPKPSPPSAVAPKPVAPPPVAAKPSGPGPFVGPSAAPPTHTPAPPAPAHTFSPKPVAGPTFAPKSASHTFMAKPSAPVFSPKAATEPPTEAPQERFPASQSSPKLTPAAKHEAPPPAAKHEAPPPASATRAPGFSFAQQRDKPRVLEKPRANVRDLVPEPPVETRGERTLGPQAEGGRSFGAQPIGGKDTKPLPEGLRNQTPDGTHRVGGQPGTHRPTPHQDQTSGSQGLNMKEVEELEMLTQQLMQEMDKPTPAAEAHTMELCGFCGRGLSRTETVVRAGEHLYHVTCFTCSKCEQQLQGQQYYESAGKPLCEECYQDTLECCAVCEKKITERLLRAIGQAYHPSCFTCAVCKCSLQGEPFIVDDNKLPHCVSDYHRRYAPRCTVCGDPIAPEPGRDETVRVVALEKNFHMMCYKCEDCGCPLSIEADDGGCFPLDGHVLCKKCHTVRARAALG.

The interval 35–447 (PPKPKVNPFR…PHQDQTSGSQ (413 aa)) is disordered. The span at 86–109 (LPPPPPNEEPMSPPGSSFPPPPPS) shows a compositional bias: pro residues. The segment covering 110-120 (FGDDGPGSPLG) has biased composition (low complexity). Composition is skewed to pro residues over residues 121–148 (LFPPPPPPEFSEPFPPPIEESFPSPPPL), 162–180 (ASVPPPPPPLPSPPEPAPP), 187–209 (KPAPVLPKPPPPSAFPKPEPPQS), 222–240 (KPSPPSAVAPKPVAPPPVA), and 254–266 (AAPPTHTPAPPAP). Basic and acidic residues-rich tracts occupy residues 328 to 341 (AKHEAPPPAAKHEA) and 358 to 387 (QRDKPRVLEKPRANVRDLVPEPPVETRGER). LIM zinc-binding domains are found at residues 481 to 542 (ELCG…TLEC), 543 to 600 (CAVC…RRYA), and 601 to 671 (PRCT…RARA).

The protein belongs to the zyxin/ajuba family. In terms of assembly, interacts (via LIM2 domain) with hesx1/anf1.

It localises to the cytoplasm. The protein resides in the cytoskeleton. The protein localises to the cell junction. It is found in the focal adhesion. In terms of biological role, adhesion plaque protein. May be a component of a signal transduction pathway that mediates adhesion-stimulated changes in gene expression. Suppresses the transcription-repressing activity of hesx1/anf1. This is Zyxin from Xenopus tropicalis (Western clawed frog).